The chain runs to 158 residues: Transcription elongation factor GreA (158 aa).

The protein belongs to the GreA/GreB family.

In terms of biological role, necessary for efficient RNA polymerase transcription elongation past template-encoded arresting sites. The arresting sites in DNA have the property of trapping a certain fraction of elongating RNA polymerases that pass through, resulting in locked ternary complexes. Cleavage of the nascent transcript by cleavage factors such as GreA or GreB allows the resumption of elongation from the new 3'terminus. GreA releases sequences of 2 to 3 nucleotides. This Ralstonia nicotianae (strain ATCC BAA-1114 / GMI1000) (Ralstonia solanacearum) protein is Transcription elongation factor GreA.